The primary structure comprises 239 residues: MEAFMVSFERQKDAKFCMYRENIPNFESTLSSITKSTNSIKILLEDISNVQKVITDPCEQSCSSCSPNVLNKFLGIEEKLVNNVEIPDSVPQKSTRPCLDDEKEGSSVVQPPESGNRHVQLISEQEFKSIPKYQLGRLTLDNLNEIVGKMDEFLTKKNAILGKTNKQITRQDREVLDNWRELEIKAKGRLPTTLFFIENDIRPLLTERLRLSFAKAIPCLRHIRRVREERCGPLTFYYA.

The tract at residues 87 to 115 is disordered; the sequence is PDSVPQKSTRPCLDDEKEGSSVVQPPESG. Residues 116-239 are microtubule binding; that stretch reads NRHVQLISEQ…RCGPLTFYYA (124 aa).

Belongs to the SKA1 family. As to quaternary structure, component of the SKA complex, composed of two copies of ska-1 and a single copy of ska-3. The core complex associates with microtubules and may form dimeric assemblies. Interacts with ska-3 and microtubules.

The protein localises to the cytoplasm. It localises to the cytoskeleton. Its subcellular location is the spindle. It is found in the chromosome. The protein resides in the centromere. The protein localises to the kinetochore. Component of the SKA complex, a microtubule plus end-binding complex of the outer kinetochore that stabilizes spindle microtubule-kinetochore attachments, promotes alignment of chromosomes at the mitotic spindle equator (chromosome congression) and assists suppression of the spindle assembly checkpoint. Kinetochores, consisting of a centromere-associated inner segment and a microtubule-contacting outer segment, play a crucial role in chromosome segregation by mediating the physical connection between centromeric DNA and spindle microtubules. The outer kinetochore is made up of the ten-subunit KMN network complex, comprising the MIS12, NDC80 and KNL1 complexes, and auxiliary microtubule-associated components such as the SKA complex; together they connect the outer kinetochore with the inner kinetochore, bind microtubules, and mediate interactions with mitotic checkpoint proteins that delay anaphase until chromosomes are bioriented on the spindle. The SKA complex is loaded onto bioriented kinetochores and it facilitates chromosome congression by stabilizing microtubules and end-on attachment of the NDC80 complex to depolymerizing spindle microtubules, thereby assisting the poleward-moving kinetochore in withstanding microtubule pulling forces. The complex associates with dynamic microtubule plus-ends and can track both depolymerizing and elongating microtubules. The complex recruits protein phosphatase 1 (PP1) to the kinetochore in prometaphase and metaphase, to oppose spindle assembly checkpoint signaling and promote the onset of anaphase. In the complex, it mediates interactions with microtubules. During meiosis the SKA complex stabilizes the meiotic spindle and is required for its migration to the cortex. This chain is SKA complex subunit 1, found in Caenorhabditis briggsae.